The sequence spans 247 residues: V-type proton ATPase subunit D (247 aa).

The protein belongs to the V-ATPase D subunit family. In terms of assembly, V-ATPase is a heteromultimeric enzyme made up of two complexes: the ATP-hydrolytic V1 complex and the proton translocation V0 complex. The V1 complex consists of three catalytic AB heterodimers that form a heterohexamer, three peripheral stalks each consisting of EG heterodimers, one central rotor including subunits D and F, and the regulatory subunits C and H. The proton translocation complex V0 consists of the proton transport subunit a, a ring of proteolipid subunits c9c'', rotary subunit d, subunits e and f, and the accessory subunits ATP6AP1/Ac45 and ATP6AP2/PRR. Interacts with SNX10.

It localises to the membrane. It is found in the cytoplasmic vesicle. Its subcellular location is the clathrin-coated vesicle membrane. The protein resides in the cytoplasm. The protein localises to the cytoskeleton. It localises to the microtubule organizing center. It is found in the centrosome. Its subcellular location is the cell projection. The protein resides in the cilium. In terms of biological role, subunit of the V1 complex of vacuolar(H+)-ATPase (V-ATPase), a multisubunit enzyme composed of a peripheral complex (V1) that hydrolyzes ATP and a membrane integral complex (V0) that translocates protons. V-ATPase is responsible for acidifying and maintaining the pH of intracellular compartments and in some cell types, is targeted to the plasma membrane, where it is responsible for acidifying the extracellular environment. May play a role in cilium biogenesis through regulation of the transport and the localization of proteins to the cilium. The sequence is that of V-type proton ATPase subunit D (ATP6V1D) from Oryctolagus cuniculus (Rabbit).